The sequence spans 151 residues: Small ribosomal subunit protein uS15 (151 aa).

It belongs to the universal ribosomal protein uS15 family.

The polypeptide is Small ribosomal subunit protein uS15 (RpS13) (Anopheles gambiae (African malaria mosquito)).